Consider the following 228-residue polypeptide: MASEELQKDLEEVKVLLEKATRKRVRDALTAEKSKIETEIKNKMQQKSQKKAELLDNEKPAAVVAPITTGYTVKISNYGWDQSDKFVKIYITLTGVHQVPTENVQVHFTERSFDLLVKNLNGKSYSMIVNNLLKPISVEGSSKKVKTDTVLILCRKKVENTRWDYLTQVEKECKEKEKPSYDTETDPSEGLMNVLKKIYEDGDDDMKRTINKAWVESREKQAKGDTEF.

At Met-1 the chain carries N-acetylmethionine. The residue at position 2 (Ala-2) is an N-acetylalanine. Positions 2–80 are interaction with SIAH1; the sequence is ASEELQKDLE…YTVKISNYGW (79 aa). Ser-3 carries the post-translational modification Phosphoserine. An N6-acetyllysine mark is found at Lys-8 and Lys-19. Phosphoserine is present on Ser-34. The CS domain maps to 73–167; sequence VKISNYGWDQ…VENTRWDYLT (95 aa). The segment at 73-228 is interaction with SKP1; the sequence is VKISNYGWDQ…EKQAKGDTEF (156 aa). 2 positions are modified to N6-acetyllysine: Lys-85 and Lys-118. The segment at 154-228 is interaction with S100A6; the sequence is CRKKVENTRW…EKQAKGDTEF (75 aa). The SGS domain occupies 168 to 228; that stretch reads QVEKECKEKE…EKQAKGDTEF (61 aa).

In terms of assembly, homodimer. Interacts with proteins of the S100 family S100A1, S100A6, S100B, S100P and S100A12 in a calcium-dependent manner. Component of some large E3 complex at least composed of UBE2D1, SIAH1, CACYBP/SIP, SKP1, APC and TBL1X. Interacts directly with SIAH1, SIAH2 and SKP1. Post-translationally, phosphorylated on serine residues. Phosphorylated upon induction by RA or at high calcium concentrations.

Its subcellular location is the nucleus. The protein resides in the cytoplasm. In terms of biological role, may be involved in calcium-dependent ubiquitination and subsequent proteasomal degradation of target proteins. Probably serves as a molecular bridge in ubiquitin E3 complexes. Participates in the ubiquitin-mediated degradation of beta-catenin (CTNNB1). This Homo sapiens (Human) protein is Calcyclin-binding protein (CACYBP).